The sequence spans 189 residues: MYKEPFGVKVDFETGIIEGAKKSVRRLSDMEGYFVDERAWKELVEKEDPVVYEVYAVEQEEKEGDLNFATTVLYPGKVGKEFFFTKGHFHAKLDRAEVYVALKGKGGMLLQTPEGDAKWISMEPGTVVYVPPYWAHRTVNIGDEPFIFLAIYPADAGHDYGTIAEKGFSKIVIEENGEVKVVDNPRWKK.

4 residues coordinate Fe cation: His-88, His-90, Glu-97, and His-136.

The protein belongs to the archaeal-type GPI family. Homodimer. Fe cation is required as a cofactor.

The protein resides in the cytoplasm. It carries out the reaction alpha-D-glucose 6-phosphate = beta-D-fructose 6-phosphate. It functions in the pathway carbohydrate degradation; glycolysis; D-glyceraldehyde 3-phosphate and glycerone phosphate from D-glucose: step 2/4. Inhibited by mannose 6-phosphate, fructose 1-phosphate and fructose 1,6-bisphosphate. This Pyrococcus furiosus (strain ATCC 43587 / DSM 3638 / JCM 8422 / Vc1) protein is Glucose-6-phosphate isomerase (pgiA).